A 354-amino-acid chain; its full sequence is Fe(3+) ions import ATP-binding protein FbpC (354 aa).

Positions 4–236 (LELHAVHKSF…PRDAQTALFL (233 aa)) constitute an ABC transporter domain. 36-43 (GPSGSGKT) is an ATP binding site.

This sequence belongs to the ABC transporter superfamily. Fe(3+) ion importer (TC 3.A.1.10) family. The complex is composed of two ATP-binding proteins (FbpC), two transmembrane proteins (FbpB) and a solute-binding protein (FbpA).

The protein localises to the cell inner membrane. It carries out the reaction Fe(3+)(out) + ATP + H2O = Fe(3+)(in) + ADP + phosphate + H(+). Functionally, part of the ABC transporter complex FbpABC involved in Fe(3+) ions import. Responsible for energy coupling to the transport system. This Pseudomonas fluorescens (strain ATCC BAA-477 / NRRL B-23932 / Pf-5) protein is Fe(3+) ions import ATP-binding protein FbpC.